Reading from the N-terminus, the 856-residue chain is Facilitated trehalose transporter Tret1 (856 aa).

Disordered regions lie at residues 1-27 (MSGR…GKLK) and 62-202 (DPFL…KATS). Over 1-389 (MSGRDNRGAG…LEVYRPTTNP (389 aa)) the chain is Cytoplasmic. Over residues 69-80 (VSPQRHPQTVRT) the composition is skewed to polar residues. Basic and acidic residues predominate over residues 133–142 (EIREHRDRQQ). Positions 170 to 180 (GNSNTNNNKAA) are enriched in polar residues. Phosphoserine is present on residues S247, S248, S249, S319, and S321. The disordered stretch occupies residues 326-345 (LTSRQHFQQQRSISTDSRKS). Residues 329–340 (RQHFQQQRSIST) are compositionally biased toward polar residues. The helical transmembrane segment at 390-410 (IFIWTQVLAALSVSLGSLVVG) threads the bilayer. Over 411–439 (FVSAYTSPALVSMTDRNITSFEVTQDAGS) the chain is Extracellular. N427 carries N-linked (GlcNAc...) asparagine glycosylation. The chain crosses the membrane as a helical span at residues 440–460 (WVGGIMPLAGLAGGIAGGPLI). Topologically, residues 461-472 (EYLGRRNTILAT) are cytoplasmic. Residues 473–493 (AVPFIVSSLLIACAVNVAMVL) traverse the membrane as a helical segment. At 494 to 496 (CGR) the chain is on the extracellular side. A helical transmembrane segment spans residues 497-517 (FLAGFCVGIASLSLPVYLGET). Over 518–527 (VQPEVRGTLG) the chain is Cytoplasmic. The chain crosses the membrane as a helical span at residues 528-548 (LLPTAFGNIGILLCFVAGSFM). N549 carries an N-linked (GlcNAc...) asparagine glycan. Residues 549 to 551 (NWS) are Extracellular-facing. Residues 552–572 (MLAFLGAALPVPFLILMFLIP) form a helical membrane-spanning segment. The Cytoplasmic segment spans residues 573–635 (ETPRWFVSRG…ELLKRNNLKP (63 aa)). Residues 636-656 (LSISLGLMFFQQLSGINAVIF) form a helical membrane-spanning segment. The Extracellular segment spans residues 657 to 672 (YTVQIFKDAGSTIDGN). A helical membrane pass occupies residues 673 to 693 (ICTIIVGVVNFLATFIGIVLI). Topologically, residues 694–699 (DRAGRK) are cytoplasmic. The chain crosses the membrane as a helical span at residues 700-720 (ILLYVSNIAMILTLFVLGGFF). Residues 721 to 739 (YCKAHGPDVSNLGWLPLTC) lie on the Extracellular side of the membrane. A helical transmembrane segment spans residues 740-760 (FVIYILGFSLGFGPIPWLMMG). The Cytoplasmic segment spans residues 761–766 (EILPAK). The helical transmembrane segment at 767–787 (IRGSAASVATAFNWSCTFVVT) threads the bilayer. Topologically, residues 788–800 (KTFQDLTVAMGAH) are extracellular. A helical membrane pass occupies residues 801 to 821 (GAFWLFGAICFVGLFFVIIYV). Residues 822–856 (PETQGKTLEDIERKMMGRVRRMSSVANIKPLSFNM) lie on the Cytoplasmic side of the membrane. Residues S844 and S845 each carry the phosphoserine modification.

This sequence belongs to the major facilitator superfamily. Sugar transporter (TC 2.A.1.1) family. Trehalose transporter subfamily.

It is found in the cell membrane. Its function is as follows. Low-capacity facilitative transporter for trehalose. Does not transport maltose, sucrose or lactose. Mediates the bidirectional transfer of trehalose. Responsible for the transport of trehalose synthesized in the fat body and the incorporation of trehalose into other tissues that require a carbon source, thereby regulating trehalose levels in the hemolymph. The protein is Facilitated trehalose transporter Tret1 of Drosophila erecta (Fruit fly).